Here is a 702-residue protein sequence, read N- to C-terminus: Phosphatase and actin regulator 4 (702 aa).

Disordered regions lie at residues 1-37 (MEDP…KSKF), 72-194 (RKPR…SSGG), and 222-363 (NLSV…PFPA). Residues 63 to 88 (EVLERKISMRKPREELVKRGVLLEDP) form an RPEL 1 repeat. A compositionally biased stretch (basic and acidic residues) spans 72–84 (RKPREELVKRGVL). Over residues 106–120 (GHTTPIGNARSSSPV) the composition is skewed to polar residues. Residues Ser-116, Ser-118, Ser-131, and Ser-147 each carry the phosphoserine modification. Positions 147–156 (STGSQPNSEA) are enriched in polar residues. The segment covering 163–173 (VPKPPLLPPKR) has biased composition (pro residues). Residues 233 to 250 (TLPAAPASTNTTATPSLT) show a composition bias toward low complexity. Phosphoserine occurs at positions 270 and 291. The segment covering 301 to 318 (PSTSVPTLESAAAITTKT) has biased composition (polar residues). A phosphoserine mark is found at Ser-342 and Ser-344. Positions 342 to 362 (SPSPPLPTHIPPEPPRTPPFP) are enriched in pro residues. Phosphothreonine is present on Thr-358. Ser-427 bears the Phosphoserine mark. Residue Thr-432 is modified to Phosphothreonine. 3 positions are modified to phosphoserine: Ser-443, Ser-453, and Ser-464. Positions 469–536 (IEMLKVPDDE…EEDEDESYQS (68 aa)) are disordered. A compositionally biased stretch (polar residues) spans 484–497 (TCPSTFSEEMTPTS). A compositionally biased stretch (acidic residues) spans 508–518 (EEEEKESDSDS). Residues Ser-514, Ser-516, Ser-557, and Ser-590 each carry the phosphoserine modification. RPEL repeat units lie at residues 583-608 (NTLI…QPKN) and 621-646 (RRLT…RFNE). Positions 592–615 (RPTPEELEQRNILQPKNEADRQAE) are disordered. A Phosphoserine modification is found at Ser-628.

This sequence belongs to the phosphatase and actin regulator family. As to quaternary structure, binds PPP1CA and actin.

The protein localises to the cytoplasm. Its subcellular location is the cell projection. The protein resides in the lamellipodium. Regulator of protein phosphatase 1 (PP1) required for neural tube and optic fissure closure, and enteric neural crest cell (ENCCs) migration during development. Acts as an activator of PP1 by interacting with PPP1CA and preventing phosphorylation of PPP1CA at 'Thr-320'. During neural tube closure, localizes to the ventral neural tube and activates PP1, leading to down-regulate cell proliferation within cranial neural tissue and the neural retina. Also acts as a regulator of migration of enteric neural crest cells (ENCCs) by activating PP1, leading to dephosphorylation and subsequent activation of cofilin (COF1 or COF2) and repression of the integrin signaling through the RHO/ROCK pathway. The sequence is that of Phosphatase and actin regulator 4 (PHACTR4) from Homo sapiens (Human).